We begin with the raw amino-acid sequence, 337 residues long: Geranylgeranyl pyrophosphate synthase subD (337 aa).

Lysine 53, arginine 56, and histidine 85 together coordinate isopentenyl diphosphate. The Mg(2+) site is built by aspartate 92 and aspartate 96. Arginine 101 is a binding site for dimethylallyl diphosphate. Arginine 102 is a binding site for isopentenyl diphosphate. Dimethylallyl diphosphate contacts are provided by lysine 179, threonine 180, and glutamine 219. Aspartate 222 is a Mg(2+) binding site. Dimethylallyl diphosphate-binding residues include asparagine 226, lysine 236, and lysine 246.

It belongs to the FPP/GGPP synthase family. Mg(2+) is required as a cofactor.

The enzyme catalyses isopentenyl diphosphate + dimethylallyl diphosphate = (2E)-geranyl diphosphate + diphosphate. It carries out the reaction isopentenyl diphosphate + (2E)-geranyl diphosphate = (2E,6E)-farnesyl diphosphate + diphosphate. The catalysed reaction is isopentenyl diphosphate + (2E,6E)-farnesyl diphosphate = (2E,6E,10E)-geranylgeranyl diphosphate + diphosphate. Its pathway is secondary metabolite biosynthesis; terpenoid biosynthesis. In terms of biological role, geranylgeranyl pyrophosphate synthase; part of the gene cluster that mediates the biosynthesis of the immunosuppressants subglutinols, meroterpenoids consisting of an alpha-pyrone (4-hydroxy-5,6-dimethyl-2-pyrone) moiety attached to a decalin core fused to a five-membered cyclic ether carrying a prenylside chain. The first step of the pathway is the synthesis of the alpha-pyrone moiety by the polyketide synthase subA via condensation of one acetyl-CoA starter unit with 3 malonyl-CoA units and 2 methylations. The alpha-pyrone is then combined with geranylgeranyl pyrophosphate (GGPP) formed by the GGPP synthase subD through the action of the prenyltransferase subC to yield a linear alpha-pyrone diterpenoid. Subsequent steps in the subglutinol biosynthetic pathway involve the decalin core formation, which is thought to be initiated by the epoxidation of the C10-C11 olefin by the FAD-dependent oxidoreductase subE. The following cyclization cascade would be catalyzed by the terpene cyclase subB. Lastly, the FAD-dependent dehydrogenase subF probably catalyzes the five-membered cyclic ether formation to complete the formation of subglutinol A. Subsequent redox reactions appear to give rise to subglutinol C and D, however, it remains unclear which enzymes are responsible for these transformations. SubD may have secondary function in the conversion of the identified subglutinols to subglutinol analog 45, which seems to be the major product of the cluster. This is Geranylgeranyl pyrophosphate synthase subD from Metarhizium robertsii (strain ARSEF 23 / ATCC MYA-3075) (Metarhizium anisopliae (strain ARSEF 23)).